Reading from the N-terminus, the 200-residue chain is Small ribosomal subunit protein uS4 (200 aa).

The tract at residues 22–43 (TGKELERRPYAPGQHGPTQRKK) is disordered. One can recognise an S4 RNA-binding domain in the interval 92 to 170 (QRLDNIVYRL…VPEYVTFDAE (79 aa)).

Belongs to the universal ribosomal protein uS4 family. Part of the 30S ribosomal subunit. Contacts protein S5. The interaction surface between S4 and S5 is involved in control of translational fidelity.

One of the primary rRNA binding proteins, it binds directly to 16S rRNA where it nucleates assembly of the body of the 30S subunit. Its function is as follows. With S5 and S12 plays an important role in translational accuracy. This chain is Small ribosomal subunit protein uS4, found in Listeria monocytogenes serotype 4a (strain HCC23).